A 418-amino-acid chain; its full sequence is 3-deoxy-D-manno-octulosonic acid transferase (418 aa).

A helical; Signal-anchor transmembrane segment spans residues 7 to 27 (FLSFLLLPIYFVIIFIRLLIG). Glu-60 acts as the Proton acceptor in catalysis. CMP-binding positions include 264 to 265 (PR), 305 to 307 (FGE), and 330 to 333 (NILE).

The protein belongs to the glycosyltransferase group 1 family. Glycosyltransferase 30 subfamily.

It is found in the cell inner membrane. The enzyme catalyses lipid IVA (E. coli) + CMP-3-deoxy-beta-D-manno-octulosonate = alpha-Kdo-(2-&gt;6)-lipid IVA (E. coli) + CMP + H(+). Its pathway is bacterial outer membrane biogenesis; LPS core biosynthesis. In terms of biological role, involved in lipopolysaccharide (LPS) biosynthesis. Catalyzes the transfer of 3-deoxy-D-manno-octulosonate (Kdo) residue(s) from CMP-Kdo to lipid IV(A), the tetraacyldisaccharide-1,4'-bisphosphate precursor of lipid A. This Rickettsia bellii (strain RML369-C) protein is 3-deoxy-D-manno-octulosonic acid transferase (waaA).